We begin with the raw amino-acid sequence, 484 residues long: Phosphomethylpyrimidine synthase (484 aa).

Residues N97, M126, Y156, H192, 212 to 214 (SRG), 253 to 256 (DSLR), and E292 contribute to the substrate site. A Zn(2+)-binding site is contributed by H296. Y319 contacts substrate. H360 lines the Zn(2+) pocket. The [4Fe-4S] cluster site is built by C440, C443, and C448.

The protein belongs to the ThiC family. [4Fe-4S] cluster serves as cofactor.

The enzyme catalyses 5-amino-1-(5-phospho-beta-D-ribosyl)imidazole + S-adenosyl-L-methionine = 4-amino-2-methyl-5-(phosphooxymethyl)pyrimidine + CO + 5'-deoxyadenosine + formate + L-methionine + 3 H(+). It functions in the pathway cofactor biosynthesis; thiamine diphosphate biosynthesis. In terms of biological role, catalyzes the synthesis of the hydroxymethylpyrimidine phosphate (HMP-P) moiety of thiamine from aminoimidazole ribotide (AIR) in a radical S-adenosyl-L-methionine (SAM)-dependent reaction. The sequence is that of Phosphomethylpyrimidine synthase from Synechococcus sp. (strain CC9605).